A 26-amino-acid chain; its full sequence is Thioredoxin H-type (26 aa).

The protein belongs to the thioredoxin family. Plant H-type subfamily.

Its subcellular location is the cytoplasm. Functionally, participates in various redox reactions through the reversible oxidation of the active center dithiol to a disulfide. The H form is known to activate a number of cytosolic enzymes. The protein is Thioredoxin H-type of Populus euphratica (Euphrates poplar).